A 299-amino-acid polypeptide reads, in one-letter code: MRVVILGSAAGGGLPQWNCRCPICTLARSEPDRVRPRTQSSIAVSADGSDWLLINASPDIRQQLFDNPQMHPREGLRHSPIRAVLLTNGDVDHVAGLLTLREGQPYTLYGTRGILDSVNANRVFDVMAEGVVARQPIGMDQRFEPLPGLSVTLFPVPGKVPLWLEDETMEIGAETETTVGALIEAGGRRLAYIPGCARVTDGLRARIAGVDALLFDGTVLHDDDMIRAGVGTKTGWRMGHVPMRGANGSIDALAAVEIGRRVFVHINNTNPVLVEGSPERVDVEAAGWTVAHDGLSLSL.

It belongs to the PqqB family.

It participates in cofactor biosynthesis; pyrroloquinoline quinone biosynthesis. In terms of biological role, may be involved in the transport of PQQ or its precursor to the periplasm. The chain is Coenzyme PQQ synthesis protein B from Methylobacterium radiotolerans (strain ATCC 27329 / DSM 1819 / JCM 2831 / NBRC 15690 / NCIMB 10815 / 0-1).